A 96-amino-acid chain; its full sequence is Large ribosomal subunit protein eL14 (96 aa).

This sequence belongs to the eukaryotic ribosomal protein eL14 family.

This is Large ribosomal subunit protein eL14 from Staphylothermus marinus (strain ATCC 43588 / DSM 3639 / JCM 9404 / F1).